Here is a 216-residue protein sequence, read N- to C-terminus: Cell division protein SepF (216 aa).

Residues 22–126 are disordered; the sequence is EYVEEPDQAR…PVVDDGGPLA (105 aa). Composition is skewed to basic and acidic residues over residues 28-50, 62-80, and 106-118; these read DQAR…REFV, SRRD…RPRV, and ARAE…RAPV.

This sequence belongs to the SepF family. Homodimer. Interacts with FtsZ.

It localises to the cytoplasm. Its function is as follows. Cell division protein that is part of the divisome complex and is recruited early to the Z-ring. Probably stimulates Z-ring formation, perhaps through the cross-linking of FtsZ protofilaments. Its function overlaps with FtsA. The sequence is that of Cell division protein SepF from Rhodococcus erythropolis (strain PR4 / NBRC 100887).